We begin with the raw amino-acid sequence, 535 residues long: uncharacterized protein (535 aa).

6 WD repeats span residues 189-226, 228-267, 269-314, 320-359, 362-404, and 462-505; these read RDDF…TRVL, ESIY…PRIS, HHPG…AVLV, AHDE…QPLY, QQNA…KIDE, and VHSV…SWHN.

The protein belongs to the WD repeat CDC20/Fizzy family.

This is an uncharacterized protein from Schizosaccharomyces pombe (strain 972 / ATCC 24843) (Fission yeast).